We begin with the raw amino-acid sequence, 598 residues long: MSFSSIVSKFLRYLEIPAKNRTAVNFLRNPDLQPIKSANQTWGFWSNLAYWGAVSFTAGTWMSGSAALSVGLSYPETIVSFLLGNVLTIIFTMANSYPGYDWKIGFTLAQRFVFGIYGSAFGIIIRILMSIVNYGSNAWLGGLSINMILDSWSHHYLHLPNTLSPSVAMTTKQLVGFIIFHVLTALCYFMKPYHMNYLLIWSCVATCFAMLGIVIYLTKNAHGVGELFTSTKSTVTGSKRAWAWVYMISYWFGSISPGSTNQSDYSRFGSSNLAIWTGSVCALLIPATLVPIFGVISASTCDKLYGKQFWMPMDIFDYWLTNNYSAGARAGAFFCGLCFTMSQMSSTISNCGFATGMDMAGLLPKYVDIKRGALFCACISWACLPWNFYNSSSTFLTVMSSFGVVMTPIIAVMICDNFLIRKRQYSITNAFILKGEYYFTKGVNWRAIVAWVCGMAPGLPGIAWEVNNNYFHDSGIVKFFYGDSFFSFLISFFVYWGLCVFFPFKITVRHDDKDYYGAFTDEEARKKGMIPYSEISEEEIRAYTLGECYTTGHEYKPESSDNESPELIKTSSENTNVFEIVHQKDDEKHSFSTTQQVV.

11 consecutive transmembrane segments (helical) span residues 48 to 68 (LAYW…SAAL), 71 to 91 (GLSY…TIIF), 112 to 132 (FVFG…MSIV), 174 to 194 (LVGF…KPYH), 197 to 217 (YLLI…VIYL), 241 to 261 (AWAW…GSTN), 273 to 293 (LAIW…VPIF), 372 to 392 (GALF…YNSS), 395 to 415 (FLTV…VMIC), 447 to 467 (AIVA…WEVN), and 484 to 504 (SFFS…FFPF). Serine 560 and serine 572 each carry phosphoserine.

This sequence belongs to the purine-cytosine permease (2.A.39) family.

The protein localises to the cell membrane. High-affinity pH-dependent nicotinamide riboside transporter which also transports thiamine with low affinity. Involved in 5-fluorocytosine sensitivity. This chain is Nicotinamide riboside transporter 1 (NRT1), found in Saccharomyces cerevisiae (strain ATCC 204508 / S288c) (Baker's yeast).